The chain runs to 508 residues: MGSFPFHRDLQEIASSQLTKALDPEEFRKQGHMVINFIADYYQNIEKYPVLSRVEPGYLKKCLPVSAPYDPEPISTILRDVQNHIVPGLTHWQSPNFFAYFSSTASTAGFLGEILTTGFNVVGFNWVSSPAATELENIVMDWLGDMLQLPKSFHFSGNGGGVLHGSTCEAIVCTMVAARDQMLRRIGSENLGKLVVYGSDQTHSTLQKATQIVGINTENFRAIKTTKSTGFALSPEMLRLTISSDLEKGLVPLFLCATIGTTATTAIDPLEALCHVAKEYGVWVHVDAAYAGSACICPEFRHFINGVEGANSFSFNPHKWLFTGMDCCCLWVKNPSVLASSLSTNPEFLRNKASDSKQVVDYKDWQIALSRRFRALKLWLVLRSYGVANLRNFIRIHVKMAKTFEGLVRMDKRFEILVPRNFSLVCFRISPSALISSNEDDEIGMVNEVNCKLLEAINASGKAYMTHAVVGGLYVLRCAVGATLTEEKHIVEAWNVVQDHAQAILSTY.

Residues H203 and H318 each contribute to the L-phenylalanine site. K319 carries the N6-(pyridoxal phosphate)lysine modification. F348 lines the L-phenylalanine pocket.

This sequence belongs to the group II decarboxylase family. Homotetramer. The cofactor is pyridoxal 5'-phosphate.

The enzyme catalyses L-phenylalanine + O2 + H2O + H(+) = 2-phenylacetaldehyde + H2O2 + NH4(+) + CO2. Bifunctional enzyme that catalyzes the decarboxylation of L-phenylalanine to produce 2-phenylethylamine, which is then oxidized to form 2-phenylacetaldehyde, a constituent of floral scent in petals. 2-phenylacetaldehyde is a precursor of 2-phenylethanol, another constituent of floral scent in petals. This is Phenylacetaldehyde synthase from Rosa hybrid cultivar.